The primary structure comprises 550 residues: Hydroxylamine reductase (550 aa).

The [2Fe-2S] cluster site is built by C3, C6, C18, and C25. Hybrid [4Fe-2O-2S] cluster-binding residues include H249, E273, C317, C405, C433, C458, E492, and K494. C405 bears the Cysteine persulfide mark.

This sequence belongs to the HCP family. The cofactor is [2Fe-2S] cluster. Requires hybrid [4Fe-2O-2S] cluster as cofactor.

Its subcellular location is the cytoplasm. It catalyses the reaction A + NH4(+) + H2O = hydroxylamine + AH2 + H(+). Its function is as follows. Catalyzes the reduction of hydroxylamine to form NH(3) and H(2)O. The protein is Hydroxylamine reductase of Escherichia coli O7:K1 (strain IAI39 / ExPEC).